The chain runs to 213 residues: 3-isopropylmalate dehydratase small subunit (213 aa).

Belongs to the LeuD family. LeuD type 1 subfamily. As to quaternary structure, heterodimer of LeuC and LeuD.

The enzyme catalyses (2R,3S)-3-isopropylmalate = (2S)-2-isopropylmalate. The protein operates within amino-acid biosynthesis; L-leucine biosynthesis; L-leucine from 3-methyl-2-oxobutanoate: step 2/4. In terms of biological role, catalyzes the isomerization between 2-isopropylmalate and 3-isopropylmalate, via the formation of 2-isopropylmaleate. This is 3-isopropylmalate dehydratase small subunit from Pseudomonas syringae pv. tomato (strain ATCC BAA-871 / DC3000).